A 949-amino-acid chain; its full sequence is Inactive atromentin synthetase invA3 (949 aa).

An adenylation (A) domain region spans residues 38 to 460 (RAVSQYPNHE…SGRIKDTVVV (423 aa)). The Carrier domain maps to 592–670 (ALSTETEKTL…NLAKYVDSLV (79 aa)). Residues 597–667 (TEKTLAGIYA…VISNLAKYVD (71 aa)) are thiolation and peptide carrier (T) domain. Residue Ser629 is modified to O-(pantetheine 4'-phosphoryl)serine. A thioesterase (TE) domain region spans residues 693–934 (PIFMVHPGMA…YTLMDFDHVA (242 aa)).

It belongs to the ATP-dependent AMP-binding enzyme family.

Its function is as follows. Inactive atromentin synthetase homolog. While the invA3 adenylation (A) domain is capable of adenylating 4-hydroxyphenylpyruvate (4-HPP), the invA3 enzyme is inactive because of its non-functional thioesterase (TE) domain. This Paxillus involutus (Naked brimcap) protein is Inactive atromentin synthetase invA3 (invA3).